Consider the following 283-residue polypeptide: Pantothenate synthetase (283 aa).

30-37 provides a ligand contact to ATP; that stretch reads MGYYHSGH. Residue His-37 is the Proton donor of the active site. Gln-61 contacts (R)-pantoate. Beta-alanine is bound at residue Gln-61. 147 to 150 contacts ATP; sequence GQKD. Gln-153 is a (R)-pantoate binding site. ATP-binding positions include Val-176 and 184 to 187; that span reads MSSR.

It belongs to the pantothenate synthetase family. Homodimer.

It is found in the cytoplasm. It catalyses the reaction (R)-pantoate + beta-alanine + ATP = (R)-pantothenate + AMP + diphosphate + H(+). The protein operates within cofactor biosynthesis; (R)-pantothenate biosynthesis; (R)-pantothenate from (R)-pantoate and beta-alanine: step 1/1. Functionally, catalyzes the condensation of pantoate with beta-alanine in an ATP-dependent reaction via a pantoyl-adenylate intermediate. The sequence is that of Pantothenate synthetase from Nitratidesulfovibrio vulgaris (strain DSM 19637 / Miyazaki F) (Desulfovibrio vulgaris).